A 440-amino-acid chain; its full sequence is Chromosome partition protein MukF (440 aa).

Residues 208 to 236 (LSETSGTLRELQDTLEAAGDKLQANLLRI) are leucine-zipper.

This sequence belongs to the MukF family. Interacts, and probably forms a ternary complex, with MukE and MukB via its C-terminal region. The complex formation is stimulated by calcium or magnesium. It is required for an interaction between MukE and MukB.

Its subcellular location is the cytoplasm. The protein resides in the nucleoid. Its function is as follows. Involved in chromosome condensation, segregation and cell cycle progression. May participate in facilitating chromosome segregation by condensation DNA from both sides of a centrally located replisome during cell division. Not required for mini-F plasmid partitioning. Probably acts via its interaction with MukB and MukE. Overexpression results in anucleate cells. It has a calcium binding activity. This chain is Chromosome partition protein MukF, found in Escherichia coli (strain UTI89 / UPEC).